The chain runs to 89 residues: UPF0298 protein GK1096 (89 aa).

The protein belongs to the UPF0298 family.

The protein localises to the cytoplasm. The protein is UPF0298 protein GK1096 of Geobacillus kaustophilus (strain HTA426).